The primary structure comprises 350 residues: MDESLAKDAVFVASSKPSDLTTEVVGPDFNKYDERKKAGGPGITVEELVESYGKIGFQATNLHDAVTIINEMRNWRDPNPPEEKSDRATIFLGYTSNLISSGVREVLRYLVQHKCVDVIVTTAGGVEEDIIKCLGPTYVGDFHLDGKNLRAKGLNRIGNLIVPNDNYCRFEEWIFPILNKMVEEQETLGTHWTPSSFIRRLGKEINDESSVLYWAYKNNIPIYSPALTDGSIGDMLYFHTYKATPRPLVLDIVADIRNMNTHAVRANKSGIIILGGGVVKHHICNANLMRNGAEWSVYINSANEFDGSDAGARPDEAVSWGKIRGDAKKVKVYGEVSLLFPLIVAATFAK.

NAD(+) contacts are provided by residues 96–100 (SNLIS), 122–124 (TAG), Glu-128, and Asp-229. 127–128 (EE) contacts spermidine. Asp-234 is a binding site for spermidine. Gly-276 contributes to the NAD(+) binding site. His-281 provides a ligand contact to spermidine. 301–302 (SA) contributes to the NAD(+) binding site. Residues 307 to 309 (GSD) and 316 to 322 (EAVSWGK) contribute to the spermidine site. Catalysis depends on Lys-322, which acts as the Nucleophile. An NAD(+)-binding site is contributed by 335-336 (EV).

This sequence belongs to the deoxyhypusine synthase family. It depends on NAD(+) as a cofactor.

The catalysed reaction is [eIF5A protein]-L-lysine + spermidine = [eIF5A protein]-deoxyhypusine + propane-1,3-diamine. Its pathway is protein modification; eIF5A hypusination. Catalyzes the NAD-dependent oxidative cleavage of spermidine and the subsequent transfer of the butylamine moiety of spermidine to the epsilon-amino group of a specific lysine residue of the eIF-5A precursor protein to form the intermediate deoxyhypusine residue. The polypeptide is Probable deoxyhypusine synthase (Schizosaccharomyces pombe (strain 972 / ATCC 24843) (Fission yeast)).